The sequence spans 156 residues: 6,7-dimethyl-8-ribityllumazine synthase (156 aa).

5-amino-6-(D-ribitylamino)uracil contacts are provided by residues F22, 57–59 (AYE), and 81–83 (TVI). A (2S)-2-hydroxy-3-oxobutyl phosphate-binding site is contributed by 86 to 87 (GT). H89 (proton donor) is an active-site residue. F114 provides a ligand contact to 5-amino-6-(D-ribitylamino)uracil. R128 lines the (2S)-2-hydroxy-3-oxobutyl phosphate pocket.

This sequence belongs to the DMRL synthase family. In terms of assembly, forms an icosahedral capsid composed of 60 subunits, arranged as a dodecamer of pentamers.

It catalyses the reaction (2S)-2-hydroxy-3-oxobutyl phosphate + 5-amino-6-(D-ribitylamino)uracil = 6,7-dimethyl-8-(1-D-ribityl)lumazine + phosphate + 2 H2O + H(+). Its pathway is cofactor biosynthesis; riboflavin biosynthesis; riboflavin from 2-hydroxy-3-oxobutyl phosphate and 5-amino-6-(D-ribitylamino)uracil: step 1/2. Functionally, catalyzes the formation of 6,7-dimethyl-8-ribityllumazine by condensation of 5-amino-6-(D-ribitylamino)uracil with 3,4-dihydroxy-2-butanone 4-phosphate. This is the penultimate step in the biosynthesis of riboflavin. The polypeptide is 6,7-dimethyl-8-ribityllumazine synthase (Erwinia tasmaniensis (strain DSM 17950 / CFBP 7177 / CIP 109463 / NCPPB 4357 / Et1/99)).